We begin with the raw amino-acid sequence, 384 residues long: Anhydro-N-acetylmuramic acid kinase (384 aa).

12–19 (GTSLDGVD) is an ATP binding site.

It belongs to the anhydro-N-acetylmuramic acid kinase family.

The catalysed reaction is 1,6-anhydro-N-acetyl-beta-muramate + ATP + H2O = N-acetyl-D-muramate 6-phosphate + ADP + H(+). It participates in amino-sugar metabolism; 1,6-anhydro-N-acetylmuramate degradation. It functions in the pathway cell wall biogenesis; peptidoglycan recycling. In terms of biological role, catalyzes the specific phosphorylation of 1,6-anhydro-N-acetylmuramic acid (anhMurNAc) with the simultaneous cleavage of the 1,6-anhydro ring, generating MurNAc-6-P. Is required for the utilization of anhMurNAc either imported from the medium or derived from its own cell wall murein, and thus plays a role in cell wall recycling. In Cronobacter sakazakii (strain ATCC BAA-894) (Enterobacter sakazakii), this protein is Anhydro-N-acetylmuramic acid kinase.